We begin with the raw amino-acid sequence, 236 residues long: MASPIHATDDSATFQETDVISGNLLSNDSSDNGHLFLRAFDGASVGAKSGNSQVTEIQGDYGTFFVKPDGSYTYVLSDAAKIGFANGESFQEKVSYKISDGSGHTDVGLFTLNIQGVTQVKPIAVDDHYSFNEGDAIGGNVLDNDIAGDNGHLFLRQFDGTNVSAKSGPDAVTDIVGDYGVFHVKPNGEFTYELTDDLAAGQTVTETVQYYKISDGEGHTDAGVLTLNITGTDALV.

It is found in the secreted. Interacts specifically in a calcium-dependent manner with the acidic exopolysaccharide (EPS) and capsular polysaccharide produced by R.leguminosarum. Could be involved in the development of the biofilm matrix made of EPS. This is Calcium-binding lectin RapA2 from Rhizobium johnstonii (strain DSM 114642 / LMG 32736 / 3841) (Rhizobium leguminosarum bv. viciae).